The following is a 240-amino-acid chain: Predicted GPI-anchored protein 58 (240 aa).

An N-terminal signal peptide occupies residues 1–18 (MQFSTLVSLAAVIVSTNA). Residues 41 to 216 (HTNCPASSPA…NSTGPSSVPT (176 aa)) are disordered. Residues 51 to 86 (TPAPAPSASAPAPPAPEQPEPSAPAPAPSAPAPEQP) are compositionally biased toward pro residues. Over residues 87 to 103 (EQPATPATPAAPATPAT) the composition is skewed to low complexity. Composition is skewed to pro residues over residues 104-137 (PAAP…PEQP) and 153-192 (APAP…PAPS). A compositionally biased stretch (low complexity) spans 193–216 (APASVPEQPASSVSNSTGPSSVPT). N207 carries N-linked (GlcNAc...) asparagine glycosylation. G219 carries the GPI-anchor amidated glycine lipid modification. The propeptide at 220 to 240 (AAAKQYITGSVAVIAAALLAL) is removed in mature form.

The protein localises to the cell membrane. This chain is Predicted GPI-anchored protein 58 (PGA58), found in Candida albicans (strain SC5314 / ATCC MYA-2876) (Yeast).